The sequence spans 418 residues: Putative ion-transport protein YfeO (418 aa).

The next 12 helical transmembrane spans lie at L10–V30, D54–I74, A99–P119, E120–P140, I149–I169, L186–P206, I223–C243, V258–V278, D300–F320, G322–H342, V343–V363, and L371–M391.

The protein belongs to the chloride channel (TC 2.A.49) family.

It localises to the cell membrane. This chain is Putative ion-transport protein YfeO, found in Escherichia coli O139:H28 (strain E24377A / ETEC).